Reading from the N-terminus, the 1163-residue chain is Actin cross-linking toxin VgrG1 (1163 aa).

In terms of domain architecture, ACD spans 728–1163 (TPDFPTHFPK…NPQEWQRIIA (436 aa)). 739 to 743 (SIGIE) contributes to the ATP binding site. Mg(2+)-binding residues include Glu-743 and Glu-805. Position 808 (Ser-808) interacts with ATP. Residue Gln-889 participates in Mg(2+) binding. ATP is bound at residue Arg-995. Glu-1066 is a binding site for Mg(2+).

It belongs to the VgrG protein family. In terms of assembly, interacts with protein VC1417. The cofactor is Mg(2+).

It is found in the secreted. The protein resides in the host cytoplasm. Its subcellular location is the host cytosol. Part of the type VI secretion system (T6SS) specialized secretion system, which delivers several virulence factors in both prokaryotic and eukaryotic cells during infection. Forms the spike at the tip of the elongating tube probably formed by hemolysin co-regulated protein/Hcp. Allows the delivery of the TseL antibacterial toxin to target cells where it exerts its toxicity. Also acts directly as an actin-directed toxin that catalyzes the covalent cross-linking of host cytoplasmic monomeric actin. Mediates the cross-link between 'Lys-50' of one monomer and 'Glu-270' of another actin monomer, resulting in formation of highly toxic actin oligomers that cause cell rounding. The toxin can be highly efficient at very low concentrations by acting on formin homology family proteins: toxic actin oligomers bind with high affinity to formins and adversely affect both nucleation and elongation abilities of formins, causing their potent inhibition in both profilin-dependent and independent manners. Acts as an acid--amino-acid ligase that transfers the gamma-phosphoryl group of ATP to the 'Glu-270' actin residue, resulting in the formation of an activated acyl phosphate intermediate. This intermediate is further hydrolyzed and the energy of hydrolysis is utilized for the formation of the amide bond between actin subunits. In Vibrio cholerae serotype O1 (strain ATCC 39315 / El Tor Inaba N16961), this protein is Actin cross-linking toxin VgrG1.